The following is a 105-amino-acid chain: QPKAAPTVNLFPPSSEELGTNKATLVCLISDFYPGAVTVTWKAGGTTVTQGVETTKPSKQSNNKYAASSYLALSASDWKSSSGFTCQVTHEGTIVEKTVTPSECA.

In terms of domain architecture, Ig-like spans 2–100 (PKAAPTVNLF…EGTIVEKTVT (99 aa)). The cysteines at positions 27 and 86 are disulfide-linked.

This chain is Ig lambda chain C region, found in Sus scrofa (Pig).